The chain runs to 66 residues: Cell division protein ZapB (66 aa).

The stretch at 3–59 (LELLSQLETKIQATLENIELLKMELEEEKQKSTQLAEKNQKLQQDLNSWSDKVNGLV) forms a coiled coil.

It belongs to the ZapB family. In terms of assembly, homodimer. The ends of the coiled-coil dimer bind to each other, forming polymers. Interacts with FtsZ.

The protein resides in the cytoplasm. Functionally, non-essential, abundant cell division factor that is required for proper Z-ring formation. It is recruited early to the divisome by direct interaction with FtsZ, stimulating Z-ring assembly and thereby promoting cell division earlier in the cell cycle. Its recruitment to the Z-ring requires functional FtsA or ZipA. This is Cell division protein ZapB from Shewanella denitrificans (strain OS217 / ATCC BAA-1090 / DSM 15013).